The following is a 62-amino-acid chain: uncharacterized protein (62 aa).

It is found in the plastid. The protein localises to the chloroplast. This is an uncharacterized protein from Chlamydomonas reinhardtii (Chlamydomonas smithii).